We begin with the raw amino-acid sequence, 763 residues long: 5-methyltetrahydropteroyltriglutamate--homocysteine methyltransferase (763 aa).

5-methyltetrahydropteroyltri-L-glutamate contacts are provided by residues 16-19 and K117; that span reads RELK. L-homocysteine contacts are provided by residues 440-442 and E493; that span reads IGS. Residues 440–442 and E493 each bind L-methionine; that span reads IGS. Residues 524–525 and W570 each bind 5-methyltetrahydropteroyltri-L-glutamate; that span reads RC. D608 is a binding site for L-homocysteine. D608 provides a ligand contact to L-methionine. Position 614 (E614) interacts with 5-methyltetrahydropteroyltri-L-glutamate. 3 residues coordinate Zn(2+): H650, C652, and E674. Residue H703 is the Proton donor of the active site. C735 lines the Zn(2+) pocket.

This sequence belongs to the vitamin-B12 independent methionine synthase family. Zn(2+) is required as a cofactor.

It carries out the reaction 5-methyltetrahydropteroyltri-L-glutamate + L-homocysteine = tetrahydropteroyltri-L-glutamate + L-methionine. It functions in the pathway amino-acid biosynthesis; L-methionine biosynthesis via de novo pathway; L-methionine from L-homocysteine (MetE route): step 1/1. Functionally, catalyzes the transfer of a methyl group from 5-methyltetrahydrofolate to homocysteine resulting in methionine formation. The chain is 5-methyltetrahydropteroyltriglutamate--homocysteine methyltransferase from Alcanivorax borkumensis (strain ATCC 700651 / DSM 11573 / NCIMB 13689 / SK2).